Reading from the N-terminus, the 322-residue chain is tRNA-dihydrouridine synthase B (322 aa).

Residues 16 to 18 (PMA) and Gln70 contribute to the FMN site. The active-site Proton donor is the Cys100. FMN-binding positions include Lys139, 200-202 (NGD), and 224-225 (GR).

The protein belongs to the Dus family. DusB subfamily. The cofactor is FMN.

It catalyses the reaction a 5,6-dihydrouridine in tRNA + NAD(+) = a uridine in tRNA + NADH + H(+). The catalysed reaction is a 5,6-dihydrouridine in tRNA + NADP(+) = a uridine in tRNA + NADPH + H(+). Catalyzes the synthesis of 5,6-dihydrouridine (D), a modified base found in the D-loop of most tRNAs, via the reduction of the C5-C6 double bond in target uridines. The protein is tRNA-dihydrouridine synthase B of Vibrio cholerae serotype O1 (strain ATCC 39315 / El Tor Inaba N16961).